We begin with the raw amino-acid sequence, 346 residues long: Methylthioribose-1-phosphate isomerase (346 aa).

Substrate-binding positions include 46-48, arginine 89, and glutamine 196; that span reads RGA. Aspartate 237 acts as the Proton donor in catalysis. Substrate is bound at residue 247–248; sequence NK.

The protein belongs to the eIF-2B alpha/beta/delta subunits family. MtnA subfamily.

It catalyses the reaction 5-(methylsulfanyl)-alpha-D-ribose 1-phosphate = 5-(methylsulfanyl)-D-ribulose 1-phosphate. It participates in amino-acid biosynthesis; L-methionine biosynthesis via salvage pathway; L-methionine from S-methyl-5-thio-alpha-D-ribose 1-phosphate: step 1/6. Functionally, catalyzes the interconversion of methylthioribose-1-phosphate (MTR-1-P) into methylthioribulose-1-phosphate (MTRu-1-P). The sequence is that of Methylthioribose-1-phosphate isomerase from Geobacter sp. (strain M21).